We begin with the raw amino-acid sequence, 411 residues long: Keratin, type I cytoskeletal 12 (411 aa).

The segment at 1–42 is head; it reads DHDYEFPGIQAFAGLGMGFGGSPGGGSLYLPSGNDGGLLSGS. A coil 1A region spans residues 43 to 78; sequence EKETMQNLNDRLASYLDKVRALEDANAELENKIREW. An IF rod domain is found at 43–359; it reads EKETMQNLND…RLLDGEAQGD (317 aa). Residues 83 to 101 are linker 1; it reads GHGHGDCGPQHDYSKYHPL. The interval 102 to 193 is coil 1B; sequence IEDLRNKIIS…KNHEEELQSC (92 aa). The linker 12 stretch occupies residues 194-216; it reads RAGGPGEVSVEMDAAPGVDLTRL. A coil 2 region spans residues 217-354; it reads LNDMRAQYEA…IETYRRLLDG (138 aa). Residues 355-411 form a tail region; the sequence is EAQGDGLDESSAMTGSRSQAQSIDSSKDPSKTRKIKTIVQEVVNGEVVSSQVQEIQN. Residues 356–387 form a disordered region; that stretch reads AQGDGLDESSAMTGSRSQAQSIDSSKDPSKTR. A compositionally biased stretch (polar residues) spans 365–378; sequence SAMTGSRSQAQSID.

This sequence belongs to the intermediate filament family. Heterotetramer of two type I and two type II keratins. Keratin-3 associates with keratin-12. In terms of tissue distribution, cornea specific. Associated mainly with all layers of the central corneal epithelium and also found in the suprabasal limbal epithelium.

Its function is as follows. Involved in corneal epithelium organization, integrity and corneal keratin expression. This Oryctolagus cuniculus (Rabbit) protein is Keratin, type I cytoskeletal 12 (KRT12).